Here is a 481-residue protein sequence, read N- to C-terminus: Glutamate--glyoxylate aminotransferase 1 (481 aa).

Position 291 is an N6-(pyridoxal phosphate)lysine (lysine 291). Residues 479–481 carry the Peroxisomal targeting signal motif; sequence SKM.

This sequence belongs to the class-I pyridoxal-phosphate-dependent aminotransferase family. Alanine aminotransferase subfamily. Homodimer. Requires pyridoxal 5'-phosphate as cofactor. The N-terminus is blocked. In terms of tissue distribution, mostly expressed in leaves, and, to a lower extent, in shoots, stems, flowers, seedlings and green siliques.

The protein localises to the peroxisome. It carries out the reaction L-alanine + 2-oxoglutarate = pyruvate + L-glutamate. The enzyme catalyses glyoxylate + L-alanine = glycine + pyruvate. It catalyses the reaction glycine + 2-oxoglutarate = glyoxylate + L-glutamate. The protein operates within amino-acid biosynthesis; glycine biosynthesis; glycine from glyoxylate: step 1/1. It functions in the pathway photosynthesis; C4 acid pathway. It participates in amino-acid degradation; L-alanine degradation via transaminase pathway; pyruvate from L-alanine: step 1/1. Its function is as follows. Catalyzes the glutamate:glyoxylate (GGT or GGAT), alanine:glyoxylate (AGT), alanine:2-oxoglutarate (AKT) and glutamate:pyruvate (GPT) aminotransferase reactions in peroxisomes. Required for abscisic acid (ABA)- and stress-mediated responses in an H(2)O(2)-dependent manner. Functions as a photorespiratory aminotransferase that modulates amino acid content during photorespiration (GGAT activity); promotes serine, glycine and citrulline metabolism in response to light. The polypeptide is Glutamate--glyoxylate aminotransferase 1 (GGAT1) (Arabidopsis thaliana (Mouse-ear cress)).